Consider the following 515-residue polypeptide: Sphingolipid 10-desaturase (515 aa).

Residues 3–23 (AVWALLWALQLGTLVGCALVL) form a helical membrane-spanning segment. One can recognise a Cytochrome b5 heme-binding domain in the interval 46–113 (AKPISDQKAA…DISFVFRVMH (68 aa)). Heme is bound by residues H90 and H113. A helical membrane pass occupies residues 198–218 (TWLLWNTAVLISIIALSVISM). Positions 245–249 (HDAEH) match the Histidine box-1 motif. A helical membrane pass occupies residues 258-278 (LNDILGWIYGTVFLGVNGAWW). The Histidine box-2 motif lies at 281–286 (EHREHH). Helical transmembrane passes span 322–342 (IIHF…FIVG), 359–379 (PWTI…LSQT), and 382–402 (PIPV…QLLG). The Histidine box-3 signature appears at 447–451 (HYSHH).

Belongs to the fatty acid desaturase type 1 family. The cofactor is Fe(2+).

It localises to the membrane. The catalysed reaction is a (4E,8E)-4-sphinga-4,8-dienine ceramide + 2 Fe(II)-[cytochrome b5] + O2 + 2 H(+) = an N-acyl-(4E,8E,10E)-sphingatrienine + 2 Fe(III)-[cytochrome b5] + 2 H2O. It functions in the pathway lipid metabolism; sphingolipid metabolism. Functionally, fatty acid desaturase that catalyzes the introduction of the third double bond at the Delta(10) position in d18:3Delta4,8,10 triunsaturated sphingolipid long fatty acid chains. The cytochrome b5 domain probably acts as the direct electron donor to the active site of the desaturase. This chain is Sphingolipid 10-desaturase, found in Thalassiosira pseudonana (Marine diatom).